The primary structure comprises 423 residues: Glutamyl-tRNA(Gln) amidotransferase subunit A (423 aa).

The interval 1 to 20 (MSHNAFITEETIEPTDDGPL) is disordered. Acidic residues predominate over residues 10-19 (ETIEPTDDGP). Catalysis depends on charge relay system residues lysine 28 and serine 103. Residues 75–108 (EFGMGTTTETSAFGPTENPAAEGRVPGGSSGGSA) are disordered. The Acyl-ester intermediate role is filled by serine 127. Residues 183-206 (DERDGTTREPPAGQPTYADAADGD) form a disordered region.

It belongs to the amidase family. GatA subfamily. In terms of assembly, heterotrimer of A, B and C subunits.

The enzyme catalyses L-glutamyl-tRNA(Gln) + L-glutamine + ATP + H2O = L-glutaminyl-tRNA(Gln) + L-glutamate + ADP + phosphate + H(+). Its function is as follows. Allows the formation of correctly charged Gln-tRNA(Gln) through the transamidation of misacylated Glu-tRNA(Gln) in organisms which lack glutaminyl-tRNA synthetase. The reaction takes place in the presence of glutamine and ATP through an activated gamma-phospho-Glu-tRNA(Gln). This Natronomonas pharaonis (strain ATCC 35678 / DSM 2160 / CIP 103997 / JCM 8858 / NBRC 14720 / NCIMB 2260 / Gabara) (Halobacterium pharaonis) protein is Glutamyl-tRNA(Gln) amidotransferase subunit A.